We begin with the raw amino-acid sequence, 167 residues long: G/U mismatch-specific DNA glycosylase (167 aa).

This sequence belongs to the uracil-DNA glycosylase (UDG) superfamily. TDG/mug family. As to quaternary structure, binds DNA as a monomer.

The protein resides in the cytoplasm. It catalyses the reaction Specifically hydrolyzes mismatched double-stranded DNA and polynucleotides, releasing free uracil.. Functionally, excises ethenocytosine and uracil, which can arise by alkylation or deamination of cytosine, respectively, from the corresponding mispairs with guanine in ds-DNA. It is capable of hydrolyzing the carbon-nitrogen bond between the sugar-phosphate backbone of the DNA and the mispaired base. The complementary strand guanine functions in substrate recognition. Required for DNA damage lesion repair in stationary-phase cells. This chain is G/U mismatch-specific DNA glycosylase, found in Pectobacterium atrosepticum (strain SCRI 1043 / ATCC BAA-672) (Erwinia carotovora subsp. atroseptica).